A 50-amino-acid chain; its full sequence is Large ribosomal subunit protein bL33B (50 aa).

Belongs to the bacterial ribosomal protein bL33 family.

The sequence is that of Large ribosomal subunit protein bL33B from Streptococcus agalactiae serotype V (strain ATCC BAA-611 / 2603 V/R).